Consider the following 194-residue polypeptide: Probable GTP-binding protein EngB (194 aa).

The EngB-type G domain maps to 22-194; the sequence is LFLEVAFAGR…WQELDTMLNP (173 aa). Residues 30-37, 57-61, 75-78, 142-145, and 173-175 contribute to the GTP site; these read GRSNVGKS, GCTQL, DLPG, TKAD, and FSS. Mg(2+)-binding residues include Ser-37 and Thr-59.

This sequence belongs to the TRAFAC class TrmE-Era-EngA-EngB-Septin-like GTPase superfamily. EngB GTPase family. Requires Mg(2+) as cofactor.

Functionally, necessary for normal cell division and for the maintenance of normal septation. The protein is Probable GTP-binding protein EngB of Desulforapulum autotrophicum (strain ATCC 43914 / DSM 3382 / VKM B-1955 / HRM2) (Desulfobacterium autotrophicum).